The primary structure comprises 264 residues: 3-methyl-2-oxobutanoate hydroxymethyltransferase (264 aa).

Mg(2+) is bound by residues Asp-45 and Asp-84. 3-methyl-2-oxobutanoate contacts are provided by residues Asp-45–Ser-46, Asp-84, and Lys-113. Glu-115 serves as a coordination point for Mg(2+). The Proton acceptor role is filled by Glu-182.

This sequence belongs to the PanB family. In terms of assembly, homodecamer; pentamer of dimers. Mg(2+) serves as cofactor.

Its subcellular location is the cytoplasm. The enzyme catalyses 3-methyl-2-oxobutanoate + (6R)-5,10-methylene-5,6,7,8-tetrahydrofolate + H2O = 2-dehydropantoate + (6S)-5,6,7,8-tetrahydrofolate. The protein operates within cofactor biosynthesis; (R)-pantothenate biosynthesis; (R)-pantoate from 3-methyl-2-oxobutanoate: step 1/2. Its function is as follows. Catalyzes the reversible reaction in which hydroxymethyl group from 5,10-methylenetetrahydrofolate is transferred onto alpha-ketoisovalerate to form ketopantoate. The chain is 3-methyl-2-oxobutanoate hydroxymethyltransferase from Caldicellulosiruptor bescii (strain ATCC BAA-1888 / DSM 6725 / KCTC 15123 / Z-1320) (Anaerocellum thermophilum).